We begin with the raw amino-acid sequence, 1188 residues long: Meiotically up-regulated gene 190 protein (1188 aa).

Polar residues predominate over residues 1-11 (MSTHSGDSTKQ). Disordered regions lie at residues 1–61 (MSTH…DPIT) and 83–125 (FTVP…EADN). A compositionally biased stretch (basic and acidic residues) spans 41 to 61 (EKKEEQQREQTENEKLFDPIT). Residues 84–112 (TVPNQSIQGSSLPSEKPYLSSNQPTNVYK) show a composition bias toward polar residues. A helical membrane pass occupies residues 173 to 193 (LVISWFFTHSIIISAVLPLAI). Positions 228–453 (IPESAEWMNH…SPKSMTIDLS (226 aa)) constitute an SMP-LTD domain. The interval 298–318 (ASESFSEKQASEAEHKDEPEQ) is disordered. Positions 302–318 (FSEKQASEAEHKDEPEQ) are enriched in basic and acidic residues. C2 domains lie at 451 to 576 (DLSK…ERCD) and 636 to 781 (KEEE…TKWY). Ca(2+) is bound by residues Asp485, Asp491, Asp544, Asp546, Ser549, and Asp552. Disordered regions lie at residues 615-639 (TIPR…KEEE) and 1002-1066 (QRAS…GTMN). Residue Ser1005 is modified to Phosphoserine. Residues 1022–1032 (DDSVDTEDEET) are compositionally biased toward acidic residues.

Ca(2+) is required as a cofactor.

It localises to the cytoplasm. The protein resides in the endoplasmic reticulum membrane. It is found in the nucleus membrane. Its subcellular location is the cytoskeleton. The protein localises to the microtubule organizing center. It localises to the spindle pole body. Has a role in meiosis. The polypeptide is Meiotically up-regulated gene 190 protein (mug190) (Schizosaccharomyces pombe (strain 972 / ATCC 24843) (Fission yeast)).